The following is a 150-amino-acid chain: Arginine repressor (150 aa).

The protein belongs to the ArgR family.

The protein localises to the cytoplasm. It functions in the pathway amino-acid biosynthesis; L-arginine biosynthesis [regulation]. Its function is as follows. Regulates arginine biosynthesis genes. The polypeptide is Arginine repressor (Clostridium botulinum (strain Alaska E43 / Type E3)).